Reading from the N-terminus, the 229-residue chain is Heptaprenylglyceryl phosphate synthase (229 aa).

Lys-12 provides a ligand contact to sn-glycerol 1-phosphate. Mg(2+)-binding residues include Asp-14 and Ser-40. Sn-glycerol 1-phosphate contacts are provided by residues 159–164 (YLEYSG), Gly-189, and 209–210 (GN).

Belongs to the GGGP/HepGP synthase family. Group I subfamily. As to quaternary structure, homodimer. The cofactor is Mg(2+).

It carries out the reaction sn-glycerol 1-phosphate + all-trans-heptaprenyl diphosphate = 3-heptaprenyl-sn-glycero-1-phosphate + diphosphate. The protein operates within membrane lipid metabolism; glycerophospholipid metabolism. Its function is as follows. Prenyltransferase that catalyzes in vivo the transfer of the heptaprenyl moiety of heptaprenyl pyrophosphate (HepPP; 35 carbon atoms) to the C3 hydroxyl of sn-glycerol-1-phosphate (G1P), producing heptaprenylglyceryl phosphate (HepGP). This reaction is an ether-bond-formation step in the biosynthesis of archaea-type G1P-based membrane lipids found in Bacillales. This Bacillus cereus (strain ZK / E33L) protein is Heptaprenylglyceryl phosphate synthase.